Here is a 248-residue protein sequence, read N- to C-terminus: Clathrin light chain A (248 aa).

The segment at 1–93 is disordered; the sequence is MAELDPFGAP…YQESNGPTDS (93 aa). The span at 13 to 25 shows a compositional bias: gly residues; that stretch reads APGGPALGNGVAG. The tract at residues 100–162 is involved in binding clathrin heavy chain; it reads VDRLQSEPES…QLQKTKASNR (63 aa). Residues S105 and S206 each carry the phosphoserine modification. K223 is modified (N6-acetyllysine). The residue at position 236 (S236) is a Phosphoserine. Residue K242 is modified to N6-acetyllysine.

It belongs to the clathrin light chain family. In terms of assembly, clathrin coats are formed from molecules containing 3 heavy chains and 3 light chains. Interacts with CALY; the interaction stimulates clathrin self-assembly and clathrin-mediated endocytosis. Interacts with CKAP5 and TACC3 forming the TACC3/ch-TOG/clathrin complex located at spindle inter-microtubules bridges; the complex implicates clathrin triskelions.

The protein localises to the cytoplasmic vesicle membrane. Its subcellular location is the membrane. The protein resides in the coated pit. It localises to the cytoplasm. It is found in the cytoskeleton. The protein localises to the spindle. Its function is as follows. Clathrin is the major protein of the polyhedral coat of coated pits and vesicles. Acts as a component of the TACC3/ch-TOG/clathrin complex proposed to contribute to stabilization of kinetochore fibers of the mitotic spindle by acting as inter-microtubule bridge. This Rattus norvegicus (Rat) protein is Clathrin light chain A (Clta).